A 349-amino-acid chain; its full sequence is Heme A synthase (349 aa).

5 consecutive transmembrane segments (helical) span residues 15–35 (AVQV…VVGG), 101–121 (LLGR…ALTG), 132–152 (FGLF…VASG), 162–182 (YRLA…VAVA), and 203–223 (VLVG…GLDA). His265 is a heme binding site. Transmembrane regions (helical) follow at residues 268–288 (IAYL…RLGG), 296–316 (LVFA…VHMV), and 317–337 (PLDL…AAMI). A heme-binding site is contributed by His324.

Belongs to the COX15/CtaA family. Type 2 subfamily. In terms of assembly, interacts with CtaB. The cofactor is heme b.

It localises to the cell membrane. The enzyme catalyses Fe(II)-heme o + 2 A + H2O = Fe(II)-heme a + 2 AH2. The protein operates within porphyrin-containing compound metabolism; heme A biosynthesis; heme A from heme O: step 1/1. Catalyzes the conversion of heme O to heme A by two successive hydroxylations of the methyl group at C8. The first hydroxylation forms heme I, the second hydroxylation results in an unstable dihydroxymethyl group, which spontaneously dehydrates, resulting in the formyl group of heme A. This chain is Heme A synthase, found in Azorhizobium caulinodans (strain ATCC 43989 / DSM 5975 / JCM 20966 / LMG 6465 / NBRC 14845 / NCIMB 13405 / ORS 571).